The sequence spans 363 residues: Tetraacyldisaccharide 4'-kinase (363 aa).

78–85 (TVGGNGKT) serves as a coordination point for ATP.

Belongs to the LpxK family.

The catalysed reaction is a lipid A disaccharide + ATP = a lipid IVA + ADP + H(+). The protein operates within glycolipid biosynthesis; lipid IV(A) biosynthesis; lipid IV(A) from (3R)-3-hydroxytetradecanoyl-[acyl-carrier-protein] and UDP-N-acetyl-alpha-D-glucosamine: step 6/6. In terms of biological role, transfers the gamma-phosphate of ATP to the 4'-position of a tetraacyldisaccharide 1-phosphate intermediate (termed DS-1-P) to form tetraacyldisaccharide 1,4'-bis-phosphate (lipid IVA). The chain is Tetraacyldisaccharide 4'-kinase from Wigglesworthia glossinidia brevipalpis.